The following is an 830-amino-acid chain: Ribosome biogenesis protein ERB1 (830 aa).

The disordered stretch occupies residues 1–142 (MAPQPLKVGT…NKDLPVDEKL (142 aa)). Composition is skewed to acidic residues over residues 35-44 (VSEESDEEFG) and 52-109 (MSDD…DSDS). A compositionally biased stretch (basic and acidic residues) spans 131–142 (EENKDLPVDEKL). WD repeat units lie at residues 481–520 (PGDT…EVWR), 523–563 (LHAG…APHI), 660–698 (KTPG…LIRT), 701–740 (SGVK…KPYK), 744–783 (YHNR…DLMQ), and 799–830 (IDGI…LWCS).

It belongs to the WD repeat BOP1/ERB1 family. As to quaternary structure, component of the NOP7 complex, composed of ERB1, NOP7 and YTM1. The complex is held together by ERB1, which interacts with NOP7 via its N-terminal domain and with YTM1 via a high-affinity interaction between the seven-bladed beta-propeller domains of the 2 proteins. The NOP7 complex associates with the 66S pre-ribosome.

It is found in the nucleus. It localises to the nucleolus. The protein localises to the nucleoplasm. Its function is as follows. Component of the NOP7 complex, which is required for maturation of the 25S and 5.8S ribosomal RNAs and formation of the 60S ribosome. The polypeptide is Ribosome biogenesis protein ERB1 (Cryptococcus neoformans var. neoformans serotype D (strain JEC21 / ATCC MYA-565) (Filobasidiella neoformans)).